Here is a 321-residue protein sequence, read N- to C-terminus: Biotin synthase (321 aa).

One can recognise a Radical SAM core domain in the interval 44 to 273 (FCGNVFDLCT…DGFVRIAAGR (230 aa)). The [4Fe-4S] cluster site is built by Cys62, Cys66, and Cys69. Ser106, Cys138, Cys198, and Arg268 together coordinate [2Fe-2S] cluster.

Belongs to the radical SAM superfamily. Biotin synthase family. Homodimer. It depends on [4Fe-4S] cluster as a cofactor. Requires [2Fe-2S] cluster as cofactor.

The catalysed reaction is (4R,5S)-dethiobiotin + (sulfur carrier)-SH + 2 reduced [2Fe-2S]-[ferredoxin] + 2 S-adenosyl-L-methionine = (sulfur carrier)-H + biotin + 2 5'-deoxyadenosine + 2 L-methionine + 2 oxidized [2Fe-2S]-[ferredoxin]. It functions in the pathway cofactor biosynthesis; biotin biosynthesis; biotin from 7,8-diaminononanoate: step 2/2. Its function is as follows. Catalyzes the conversion of dethiobiotin (DTB) to biotin by the insertion of a sulfur atom into dethiobiotin via a radical-based mechanism. The polypeptide is Biotin synthase (Akkermansia muciniphila (strain ATCC BAA-835 / DSM 22959 / JCM 33894 / BCRC 81048 / CCUG 64013 / CIP 107961 / Muc)).